The primary structure comprises 137 residues: Proofreading thioesterase EntH (137 aa).

The Nucleophile or proton acceptor role is filled by E63.

Belongs to the thioesterase PaaI family. In terms of assembly, homotetramer. Dimer of dimers. Interacts specifically with the aryl carrier protein (ArCP) domain of EntB.

The protein resides in the cytoplasm. Its pathway is siderophore biosynthesis; enterobactin biosynthesis. In terms of biological role, required for optimal enterobactin synthesis. Acts as a proofreading enzyme that prevents EntB misacylation by hydrolyzing the thioester bound existing between EntB and wrongly charged molecules. This chain is Proofreading thioesterase EntH, found in Enterobacter lignolyticus (strain SCF1).